The sequence spans 699 residues: Envelope glycoprotein G (699 aa).

The first 22 residues, 1–22 (MHAIAPRLLLLFVLSGLPGTRG), serve as a signal peptide directing secretion. Residues 23 to 650 (GSGVPGPINP…WFLTASPALD (628 aa)) lie on the Virion surface side of the membrane. 2 N-linked (GlcNAc...) asparagine; by host glycosylation sites follow: N104 and N163. 2 disordered regions span residues 302-390 (PGAL…TTPP) and 403-632 (TPEE…PSGP). Positions 323–336 (LRTDPEGVDPDVRA) are enriched in basic and acidic residues. A compositionally biased stretch (polar residues) spans 348–359 (EDTSSDSPTSAP). Composition is skewed to low complexity over residues 376–390 (DPSA…TTPP) and 403–447 (TPEE…AKTP). The N-linked (GlcNAc...) asparagine; by host glycan is linked to N437. Composition is skewed to pro residues over residues 448-459 (PTTPAPTTPPPT) and 467-482 (PTTP…PATP). Over residues 483-531 (GPVGASAAPTADSPLTASPPATAPGPSAANVSVAATTATPGTRGTARTP) the composition is skewed to low complexity. N512 carries N-linked (GlcNAc...) asparagine; by host glycosylation. Over residues 544–554 (DAPPGSPAPPP) the composition is skewed to pro residues. The span at 562–578 (EEFEGAGDGEPPEDDDS) shows a compositional bias: acidic residues. Over residues 589–605 (PNKPPPARPGPIRPTLP) the composition is skewed to pro residues. A helical membrane pass occupies residues 651-671 (ILFIISTTIHTAAFVCLVALA). Topologically, residues 672–699 (AQLWRGRAGRRRYAHPSVRYVCLPPERD) are intravirion.

The protein belongs to the alphaherpesvirinae glycoprotein G family.

It localises to the virion membrane. Functionally, chemokine-binding protein that inhibits neutrophils' chemotaxis. The chain is Envelope glycoprotein G (gG) from Human herpesvirus 2 (strain HG52) (HHV-2).